A 105-amino-acid chain; its full sequence is Large ribosomal subunit protein uL24 (105 aa).

Belongs to the universal ribosomal protein uL24 family. In terms of assembly, part of the 50S ribosomal subunit.

In terms of biological role, one of two assembly initiator proteins, it binds directly to the 5'-end of the 23S rRNA, where it nucleates assembly of the 50S subunit. One of the proteins that surrounds the polypeptide exit tunnel on the outside of the subunit. The sequence is that of Large ribosomal subunit protein uL24 from Mycobacterium sp. (strain JLS).